We begin with the raw amino-acid sequence, 307 residues long: Secondary metabolism regulator LAE1 (307 aa).

It belongs to the methyltransferase superfamily. LaeA methyltransferase family. As to quaternary structure, component of the heterotrimeric velvet complex composed of LAE1, VEL1 and VEL2; VEL1 acting as a bridging protein between LAE1 and VEL2.

The protein resides in the nucleus. It carries out the reaction L-methionyl-[protein] + S-adenosyl-L-methionine = S-methyl-L-methionyl-[protein] + S-adenosyl-L-homocysteine. In terms of biological role, methyltransferase that performs automethylation. No other methyl-accepting substrate has been identified yet. Component of the velvet transcription factor complex that acts as a global regulator for secondary metabolite gene expression. Controls the expression of the T-toxin gene cluster. Promotes oxidative stress tolerance and acts as a virulence factors during infection. Negatively regulate mycelial pigmentation and controls sexual development, as well as asexual development during vegetative growth. The polypeptide is Secondary metabolism regulator LAE1 (Cochliobolus heterostrophus (strain C5 / ATCC 48332 / race O) (Southern corn leaf blight fungus)).